Consider the following 190-residue polypeptide: dCTP deaminase (190 aa).

DCTP contacts are provided by residues 113–118 (KSTYAR), 137–139 (TLE), Gln158, Tyr172, and Gln182. The Proton donor/acceptor role is filled by Glu139.

It belongs to the dCTP deaminase family. In terms of assembly, homotrimer.

The catalysed reaction is dCTP + H2O + H(+) = dUTP + NH4(+). It participates in pyrimidine metabolism; dUMP biosynthesis; dUMP from dCTP (dUTP route): step 1/2. Its function is as follows. Catalyzes the deamination of dCTP to dUTP. This is dCTP deaminase from Chromobacterium violaceum (strain ATCC 12472 / DSM 30191 / JCM 1249 / CCUG 213 / NBRC 12614 / NCIMB 9131 / NCTC 9757 / MK).